The sequence spans 324 residues: Glutathione synthetase (324 aa).

The region spanning 124 to 309 (KLAIAQFREF…VAGMFIDALE (186 aa)) is the ATP-grasp domain. 150 to 206 (HAEQGDVIFKPLDGMGGAGIFRVGADGMNLGSVIETLTHNGTRTVMAQQYIPAIRDG) lines the ATP pocket. Residues Glu-280 and Asn-282 each contribute to the Mg(2+) site.

It belongs to the prokaryotic GSH synthase family. The cofactor is Mg(2+). Requires Mn(2+) as cofactor.

The enzyme catalyses gamma-L-glutamyl-L-cysteine + glycine + ATP = glutathione + ADP + phosphate + H(+). The protein operates within sulfur metabolism; glutathione biosynthesis; glutathione from L-cysteine and L-glutamate: step 2/2. In Ralstonia nicotianae (strain ATCC BAA-1114 / GMI1000) (Ralstonia solanacearum), this protein is Glutathione synthetase.